Here is a 203-residue protein sequence, read N- to C-terminus: MDLFSWQLGLPATLLCLAFGYLLGSIPFGLILTRMAGLGDVRKIGSGNIGATNVLRTGNKKLAAATLLLDALKGTAAAAIASLWGVEAGIAAGLAAFLGHLFPVWLSFKGGKGVATYIGVLLGLAPLMVPAFAAIWLAAAKITRYSSLSALIATAVMPIALYATGYGKVALLFALMTVITWIKHRANIQRLLSGTESRIGEKG.

5 helical membrane-spanning segments follow: residues 12-32 (ATLL…GLIL), 66-86 (TLLL…LWGV), 88-108 (AGIA…WLSF), 118-138 (IGVL…IWLA), and 159-179 (IALY…MTVI).

The protein belongs to the PlsY family. In terms of assembly, probably interacts with PlsX.

The protein localises to the cell inner membrane. It carries out the reaction an acyl phosphate + sn-glycerol 3-phosphate = a 1-acyl-sn-glycero-3-phosphate + phosphate. The protein operates within lipid metabolism; phospholipid metabolism. Functionally, catalyzes the transfer of an acyl group from acyl-phosphate (acyl-PO(4)) to glycerol-3-phosphate (G3P) to form lysophosphatidic acid (LPA). This enzyme utilizes acyl-phosphate as fatty acyl donor, but not acyl-CoA or acyl-ACP. This chain is Glycerol-3-phosphate acyltransferase, found in Sinorhizobium fredii (strain NBRC 101917 / NGR234).